Consider the following 512-residue polypeptide: Cytochrome P450 72A13 (512 aa).

The chain crosses the membrane as a helical span at residues 2-22 (EISVASVTVSVAVVVVSWWVW). Heme is bound at residue C460.

It belongs to the cytochrome P450 family. It depends on heme as a cofactor.

Its subcellular location is the membrane. The chain is Cytochrome P450 72A13 (CYP72A13) from Arabidopsis thaliana (Mouse-ear cress).